The following is a 250-amino-acid chain: Hemocyanin, units C and D (250 aa).

His1 lines the Cu cation pocket. The segment at 1–106 (HGSTKWCPSP…RAWIEPVTSA (106 aa)) is unit C. Cys7 and Cys18 form a disulfide bridge. Residues 19 to 21 (CHH) constitute a cross-link (2'-(S-cysteinyl)-histidine (Cys-His)). 2 residues coordinate Cu cation: His21 and His143. The unit D stretch occupies residues 107 to 250 (VRIRKNLNDL…DAQDVIYNNH (144 aa)). Cys149 and Cys160 are joined by a disulfide. A cross-link (2'-(S-cysteinyl)-histidine (Cys-His)) is located at residues 161-163 (CLH). His172 serves as a coordination point for Cu cation.

The protein belongs to the tyrosinase family. Hemocyanin subfamily. As to quaternary structure, decamers of large identical subunits (390 kDa), each containing 8 globular oxygen-binding functional units. Requires Cu(2+) as cofactor.

Functionally, hemocyanins are copper-containing oxygen carriers occurring freely dissolved in the hemolymph of many mollusks and arthropods. This chain is Hemocyanin, units C and D, found in Sepia officinalis (Common cuttlefish).